The sequence spans 344 residues: S-adenosylmethionine:tRNA ribosyltransferase-isomerase (344 aa).

It belongs to the QueA family. Monomer.

It localises to the cytoplasm. It carries out the reaction 7-aminomethyl-7-carbaguanosine(34) in tRNA + S-adenosyl-L-methionine = epoxyqueuosine(34) in tRNA + adenine + L-methionine + 2 H(+). Its pathway is tRNA modification; tRNA-queuosine biosynthesis. Functionally, transfers and isomerizes the ribose moiety from AdoMet to the 7-aminomethyl group of 7-deazaguanine (preQ1-tRNA) to give epoxyqueuosine (oQ-tRNA). In Nitrosococcus oceani (strain ATCC 19707 / BCRC 17464 / JCM 30415 / NCIMB 11848 / C-107), this protein is S-adenosylmethionine:tRNA ribosyltransferase-isomerase.